Here is a 269-residue protein sequence, read N- to C-terminus: Diaminopimelate epimerase (269 aa).

Substrate contacts are provided by asparagine 15 and asparagine 66. Residue cysteine 75 is the Proton donor of the active site. Residues glycine 76–asparagine 77, asparagine 152, asparagine 185, and glutamate 203–arginine 204 contribute to the substrate site. Cysteine 212 acts as the Proton acceptor in catalysis. Glycine 213 to threonine 214 is a binding site for substrate.

This sequence belongs to the diaminopimelate epimerase family. In terms of assembly, homodimer.

The protein resides in the cytoplasm. It catalyses the reaction (2S,6S)-2,6-diaminopimelate = meso-2,6-diaminopimelate. Its pathway is amino-acid biosynthesis; L-lysine biosynthesis via DAP pathway; DL-2,6-diaminopimelate from LL-2,6-diaminopimelate: step 1/1. In terms of biological role, catalyzes the stereoinversion of LL-2,6-diaminopimelate (L,L-DAP) to meso-diaminopimelate (meso-DAP), a precursor of L-lysine and an essential component of the bacterial peptidoglycan. This is Diaminopimelate epimerase from Parabacteroides distasonis (strain ATCC 8503 / DSM 20701 / CIP 104284 / JCM 5825 / NCTC 11152).